We begin with the raw amino-acid sequence, 1125 residues long: Kinase and exchange factor for Rac B (1125 aa).

3 disordered regions span residues 50-175 (VTGG…ASIN), 247-287 (SVPG…GGKF), and 322-362 (KTRD…VNSD). Over residues 59 to 91 (NNQQQQQNNNNNNNNNNNNNNNNNNNNNNNNNN) the composition is skewed to low complexity. The segment covering 92–106 (SGEISSNNSTPSILF) has biased composition (polar residues). Positions 113–124 (TAPPAPPQPTTP) are enriched in pro residues. Low complexity predominate over residues 137–161 (NINQQPIGGVNNNNNNNNKDSPSNK). In terms of domain architecture, DH spans 380-571 (KRRQVSLQIL…KSTVDYVKEK (192 aa)). The PH domain occupies 601-822 (RYVREGMLTE…WIQAIHANII (222 aa)). 2 disordered regions span residues 693–729 (INNM…SNNN) and 761–791 (SNNN…YSNG). Residues 694 to 729 (NNMTNNDSKSKNNNNNNSNGNNNNNNINSNSNSNNN) show a composition bias toward low complexity. A Protein kinase domain is found at 848–1117 (IKLCEQIGSG…QLVQKLTKML (270 aa)). ATP contacts are provided by residues 854–862 (IGSGGSGCT) and Lys-876. Residue Asp-971 is the Proton acceptor of the active site.

Belongs to the protein kinase superfamily. STE Ser/Thr protein kinase family. The cofactor is Mg(2+).

The catalysed reaction is L-seryl-[protein] + ATP = O-phospho-L-seryl-[protein] + ADP + H(+). It catalyses the reaction L-threonyl-[protein] + ATP = O-phospho-L-threonyl-[protein] + ADP + H(+). The polypeptide is Kinase and exchange factor for Rac B (Dictyostelium discoideum (Social amoeba)).